The chain runs to 206 residues: Ribosomal RNA large subunit methyltransferase E (206 aa).

5 residues coordinate S-adenosyl-L-methionine: Gly60, Trp62, Asp80, Asp96, and Asp121. Lys161 functions as the Proton acceptor in the catalytic mechanism.

It belongs to the class I-like SAM-binding methyltransferase superfamily. RNA methyltransferase RlmE family.

The protein resides in the cytoplasm. It carries out the reaction uridine(2552) in 23S rRNA + S-adenosyl-L-methionine = 2'-O-methyluridine(2552) in 23S rRNA + S-adenosyl-L-homocysteine + H(+). In terms of biological role, specifically methylates the uridine in position 2552 of 23S rRNA at the 2'-O position of the ribose in the fully assembled 50S ribosomal subunit. This Legionella pneumophila (strain Corby) protein is Ribosomal RNA large subunit methyltransferase E.